A 1060-amino-acid chain; its full sequence is DNA-directed RNA polymerase subunit beta (1060 aa).

This sequence belongs to the RNA polymerase beta chain family. In plastids the minimal PEP RNA polymerase catalytic core is composed of four subunits: alpha, beta, beta', and beta''. When a (nuclear-encoded) sigma factor is associated with the core the holoenzyme is formed, which can initiate transcription.

It is found in the plastid. It localises to the chloroplast. It carries out the reaction RNA(n) + a ribonucleoside 5'-triphosphate = RNA(n+1) + diphosphate. Functionally, DNA-dependent RNA polymerase catalyzes the transcription of DNA into RNA using the four ribonucleoside triphosphates as substrates. The protein is DNA-directed RNA polymerase subunit beta of Helianthus annuus (Common sunflower).